We begin with the raw amino-acid sequence, 83 residues long: Scyreptin (83 aa).

In terms of biological role, cationic antimicrobial peptide that exhibits a potent and broad-spectrum antimicrobial activity against both bacteria and fungi, as well as against the multidrug-resistant bacteria P.aeruginosa. Exhibits rapid bactericidal kinetic. Acts by destroying the integrity of bacterial membranes, leading to bacterial death. Also exhibits potent anti-biofilm activity against P.aeruginosa. Shows high thermal stability and ion tolerance, as it maintains antibacterial activity even when heated to 100 degrees Celsius for 30 minutes and in presence of high levels of NaCl, CaCl(2) and MgCl(2). Does not show cytotoxicity and hemolytic activity. In a mouse model of burn infection, exhibits a remarkably reduction in the bacterial load caused by multidrug-resistant P.aeruginosa at the site of infection, and promotes wound healing. This chain is Scyreptin, found in Scylla paramamosain (Mud crab).